A 591-amino-acid polypeptide reads, in one-letter code: MDQDQHPQYGIPELRQLMKGGGRTTTTTPSTSSHFPSDFFGFNLAPVQPPPHRLHQFTTDQDMGFLPRGIHGLGGGSSTAGNNSNLNASTSGGGVGFSGFLDGGGFGSGVGGDGGGTGRWPRQETLTLLEIRSRLDHKFKEANQKGPLWDEVSRIMSEEHGYQRSGKKCREKFENLYKYYRKTKEGKAGRQDGKHYRFFRQLEALYGDSNNLVSCPNHNTQFMSSALHGFHTQNPMNVTTTTSNIHNVDSVHGFHQSLSLSNNYNSSELELMTSSSEGNDSSSRRKKRSWKAKIKEFIDTNMKRLIERQDVWLEKLTKVIEDKEEQRMMKEEEWRKIEAARIDKEHLFWAKERARMEARDVAVIEALQYLTGKPLIKPLCSSPEERTNGNNEIRNNSETQNENGSDQTMTNNVCVKGSSSCWGEQEILKLMEIRTSMDSTFQEILGGCSDEFLWEEIAAKLIQLGFDQRSALLCKEKWEWISNGMRKEKKQINKKRKDNSSSCGVYYPRNEENPIYNNRESGYNDNDPHQINEQGNVGSSTSNANANANVTTGNPSGAMAASTNCFPFFMGDGDQNLWESYGLRLSKEENQ.

Positions 1–32 (MDQDQHPQYGIPELRQLMKGGGRTTTTTPSTS) are disordered. A Myb-like 1 domain is found at 118-177 (GRWPRQETLTLLEIRSRLDHKFKEANQKGPLWDEVSRIMSEEHGYQRSGKKCREKFENLY). A disordered region spans residues 380-410 (CSSPEERTNGNNEIRNNSETQNENGSDQTMT). The segment covering 388–410 (NGNNEIRNNSETQNENGSDQTMT) has biased composition (polar residues). A Myb-like 2 domain is found at 422–479 (WGEQEILKLMEIRTSMDSTFQEILGGCSDEFLWEEIAAKLIQLGFDQRSALLCKEKWE). Residues 491-551 (QINKKRKDNS…SNANANANVT (61 aa)) are disordered. The segment covering 515-534 (IYNNRESGYNDNDPHQINEQ) has biased composition (polar residues). Residues 535 to 551 (GNVGSSTSNANANANVT) are compositionally biased toward low complexity.

In terms of assembly, interacts with KIN10. Confined to flowers, at low levels. Also present in 7-days-old seedlings. Barely detectable in other tissues such as young seedlings, roots, stems, leaves and siliques. Expressed in flower primordia, more precisely between newly arisen sepal primordia and also at the basal margins of developing sepals.

It localises to the nucleus. In terms of biological role, transcription factor that prevents growth. Regulates perianth architecture in flower, mostly in the second whorl, probably by suppressing growth between initiating sepals, ensuring that they remain separate, and by modulating organ shapes. Required for the establishment of auxin flux. The polypeptide is Trihelix transcription factor PTL (PTL) (Arabidopsis thaliana (Mouse-ear cress)).